The primary structure comprises 124 residues: Large ribosomal subunit protein bL12 (124 aa).

This sequence belongs to the bacterial ribosomal protein bL12 family. In terms of assembly, homodimer. Part of the ribosomal stalk of the 50S ribosomal subunit. Forms a multimeric L10(L12)X complex, where L10 forms an elongated spine to which 2 to 4 L12 dimers bind in a sequential fashion. Binds GTP-bound translation factors.

Its function is as follows. Forms part of the ribosomal stalk which helps the ribosome interact with GTP-bound translation factors. Is thus essential for accurate translation. The chain is Large ribosomal subunit protein bL12 from Dehalococcoides mccartyi (strain ATCC BAA-2266 / KCTC 15142 / 195) (Dehalococcoides ethenogenes (strain 195)).